The following is a 526-amino-acid chain: Reelin domain-containing protein 1 (526 aa).

The N-terminal stretch at 1–23 (MRMQAALVGWACTTLCLASCSSA) is a signal peptide. Residues 24–179 (FSHGASTVAC…SAHSDDRMEP (156 aa)) form the Reelin domain. Residues 24 to 443 (FSHGASTVAC…PLGIQLRTPQ (420 aa)) are Extracellular-facing. Disordered regions lie at residues 242–272 (DAET…PTLE), 294–336 (FASS…TVTQ), and 370–398 (LQTS…LPQS). Residues 245-271 (TLSQPSSHTATEGSINQQPSGDSNPTL) are compositionally biased toward polar residues. A compositionally biased stretch (polar residues) spans 385 to 396 (SEASRASASFLP). Residues 444–462 (LGILLCLSATLGMALAAGL) form a helical membrane-spanning segment. Residues 463 to 526 (RYLHTQYCHQ…PSVGSKKTVL (64 aa)) lie on the Cytoplasmic side of the membrane.

The protein localises to the membrane. The sequence is that of Reelin domain-containing protein 1 from Homo sapiens (Human).